The primary structure comprises 485 residues: Ribulose bisphosphate carboxylase large chain (485 aa).

Substrate is bound by residues Asn124 and Thr174. Lys176 (proton acceptor) is an active-site residue. Lys178 contributes to the substrate binding site. The Mg(2+) site is built by Lys202, Asp204, and Glu205. Lys202 carries the post-translational modification N6-carboxylysine. Residue His294 is the Proton acceptor of the active site. Substrate-binding residues include Arg295, His327, and Ser379.

It belongs to the RuBisCO large chain family. Type I subfamily. As to quaternary structure, heterohexadecamer of 8 large chains and 8 small chains. Requires Mg(2+) as cofactor.

It catalyses the reaction 2 (2R)-3-phosphoglycerate + 2 H(+) = D-ribulose 1,5-bisphosphate + CO2 + H2O. The enzyme catalyses D-ribulose 1,5-bisphosphate + O2 = 2-phosphoglycolate + (2R)-3-phosphoglycerate + 2 H(+). Its function is as follows. RuBisCO catalyzes two reactions: the carboxylation of D-ribulose 1,5-bisphosphate, the primary event in carbon dioxide fixation, as well as the oxidative fragmentation of the pentose substrate. Both reactions occur simultaneously and in competition at the same active site. In Rhodopseudomonas palustris (strain HaA2), this protein is Ribulose bisphosphate carboxylase large chain.